A 598-amino-acid polypeptide reads, in one-letter code: UvrABC system protein C (598 aa).

Residues 13-92 enclose the GIY-YIG domain; sequence SSPGVYLMKD…IKKYQPRYNV (80 aa). The 36-residue stretch at 206-241 folds into the UVR domain; that stretch reads RSTISNLEKAIEKASQEQKFEHAAALYRTLTLIRQT.

This sequence belongs to the UvrC family. In terms of assembly, interacts with UvrB in an incision complex.

It is found in the cytoplasm. In terms of biological role, the UvrABC repair system catalyzes the recognition and processing of DNA lesions. UvrC both incises the 5' and 3' sides of the lesion. The N-terminal half is responsible for the 3' incision and the C-terminal half is responsible for the 5' incision. This is UvrABC system protein C from Chlamydia trachomatis serovar A (strain ATCC VR-571B / DSM 19440 / HAR-13).